An 88-amino-acid polypeptide reads, in one-letter code: Small ribosomal subunit protein uS17 (88 aa).

Belongs to the universal ribosomal protein uS17 family. As to quaternary structure, part of the 30S ribosomal subunit.

Functionally, one of the primary rRNA binding proteins, it binds specifically to the 5'-end of 16S ribosomal RNA. The sequence is that of Small ribosomal subunit protein uS17 from Oenococcus oeni (strain ATCC BAA-331 / PSU-1).